Consider the following 205-residue polypeptide: HTH-type transcriptional repressor KstR2 (205 aa).

One can recognise an HTH tetR-type domain in the interval 10-70 (ASRRDELLQL…EVLRDFLDWL (61 aa)). The segment at residues 33–52 (TVRDIADSAGILSGSLYHHF) is a DNA-binding region (H-T-H motif).

Homodimer.

Its function is as follows. Controls the expression of a small regulon that may play a role in the utilization of cholesterol. This Mycolicibacterium smegmatis (strain ATCC 700084 / mc(2)155) (Mycobacterium smegmatis) protein is HTH-type transcriptional repressor KstR2 (kstR2).